A 255-amino-acid polypeptide reads, in one-letter code: Ribonuclease HII (255 aa).

Residues Asn-72 to Glu-255 form the RNase H type-2 domain. Positions 78, 79, and 170 each coordinate a divalent metal cation.

The protein belongs to the RNase HII family. It depends on Mn(2+) as a cofactor. Mg(2+) is required as a cofactor.

The protein resides in the cytoplasm. It carries out the reaction Endonucleolytic cleavage to 5'-phosphomonoester.. Functionally, endonuclease that specifically degrades the RNA of RNA-DNA hybrids. The sequence is that of Ribonuclease HII from Ruminiclostridium cellulolyticum (strain ATCC 35319 / DSM 5812 / JCM 6584 / H10) (Clostridium cellulolyticum).